The following is a 178-amino-acid chain: Conodipine-P3 (178 aa).

The signal sequence occupies residues 1–24 (MKLLAPVLWAMAALGVTWLVAVDS). The residue at position 38 (P38) is a 4-hydroxyproline. 4-hydroxyproline; partial occurs at positions 42 and 49. H54 is an active-site residue. The propeptide at 98–130 (KREVTSHRATSIAHSRLWKTALDQKSFLNRKAR) is interchain peptide. A Pyrrolidone carboxylic acid modification is found at Q131. A 4-hydroxyproline; partial modification is found at P137.

The protein belongs to the phospholipase A2 family. Group IX subfamily. In terms of assembly, heterodimer of an alpha and a beta chain; probably disulfide-linked. It depends on Ca(2+) as a cofactor. Expressed by the venom duct.

Its subcellular location is the secreted. The enzyme catalyses a 1,2-diacyl-sn-glycero-3-phosphocholine + H2O = a 1-acyl-sn-glycero-3-phosphocholine + a fatty acid + H(+). Functionally, catalyzes the calcium-dependent hydrolysis of the 2-acyl groups in 3-sn-phosphoglycerides. The sequence is that of Conodipine-P3 from Conus purpurascens (Purple cone).